Consider the following 160-residue polypeptide: Putative UPF0479 protein YBL113W-A (160 aa).

A run of 2 helical transmembrane segments spans residues 39–59 (IVFCLPFFPALFFVPVQKVLQ) and 136–156 (VPMIWLDVFQVFFVFLIISQH).

The protein belongs to the UPF0479 family.

It is found in the membrane. This is Putative UPF0479 protein YBL113W-A from Saccharomyces cerevisiae (strain ATCC 204508 / S288c) (Baker's yeast).